We begin with the raw amino-acid sequence, 446 residues long: Tubulin beta-1 chain (446 aa).

Positions 11, 69, 138, 142, 143, 144, 204, and 226 each coordinate GTP. E69 lines the Mg(2+) pocket. The segment at 422–446 (YQQYQDATADEEGEYEDEEEGDLQD) is disordered. The span at 429–446 (TADEEGEYEDEEEGDLQD) shows a compositional bias: acidic residues.

This sequence belongs to the tubulin family. Dimer of alpha and beta chains. A typical microtubule is a hollow water-filled tube with an outer diameter of 25 nm and an inner diameter of 15 nM. Alpha-beta heterodimers associate head-to-tail to form protofilaments running lengthwise along the microtubule wall with the beta-tubulin subunit facing the microtubule plus end conferring a structural polarity. Microtubules usually have 13 protofilaments but different protofilament numbers can be found in some organisms and specialized cells. Mg(2+) is required as a cofactor. In terms of tissue distribution, found in areas of rapidly dividing tissues.

It localises to the cytoplasm. It is found in the cytoskeleton. Functionally, tubulin is the major constituent of microtubules, a cylinder consisting of laterally associated linear protofilaments composed of alpha- and beta-tubulin heterodimers. Microtubules grow by the addition of GTP-tubulin dimers to the microtubule end, where a stabilizing cap forms. Below the cap, tubulin dimers are in GDP-bound state, owing to GTPase activity of alpha-tubulin. This Zea mays (Maize) protein is Tubulin beta-1 chain (TUBB1).